The following is a 130-amino-acid chain: MSDEFYYGTGRRKSAVARTRLYKGNGRILVNDRPFEEYFPRPTLLAIVRQALALTKLEGRLDVKVNVAGGGMTGQAEAVRHGISRALCILDPELRGVLKKAGLLTRDSREKERKKYGQRGARARFQYSKR.

Positions Ser-108–Arg-130 are disordered.

It belongs to the universal ribosomal protein uS9 family.

The protein is Small ribosomal subunit protein uS9 of Solidesulfovibrio magneticus (strain ATCC 700980 / DSM 13731 / RS-1) (Desulfovibrio magneticus).